A 103-amino-acid chain; its full sequence is Stefin-3 (103 aa).

The Secondary area of contact signature appears at 52 to 56; that stretch reads QVVAG.

The protein belongs to the cystatin family.

Its subcellular location is the cytoplasm. Its function is as follows. This is an intracellular thiol proteinase inhibitor. In Mus musculus (Mouse), this protein is Stefin-3 (Stfa3).